Here is a 324-residue protein sequence, read N- to C-terminus: tRNA N6-adenosine threonylcarbamoyltransferase (324 aa).

Residues H107, H111, and Y127 each coordinate Fe cation. Substrate is bound by residues 127-131 (YVSGG), D159, G172, E176, and N257. Position 285 (D285) interacts with Fe cation.

This sequence belongs to the KAE1 / TsaD family. In terms of assembly, monomer. Component of the KEOPS complex that consists of Kae1, Bud32, Cgi121 and Pcc1; the whole complex dimerizes. Fe(2+) is required as a cofactor.

It localises to the cytoplasm. It carries out the reaction L-threonylcarbamoyladenylate + adenosine(37) in tRNA = N(6)-L-threonylcarbamoyladenosine(37) in tRNA + AMP + H(+). Its function is as follows. Required for the formation of a threonylcarbamoyl group on adenosine at position 37 (t(6)A37) in tRNAs that read codons beginning with adenine. Is a component of the KEOPS complex that is probably involved in the transfer of the threonylcarbamoyl moiety of threonylcarbamoyl-AMP (TC-AMP) to the N6 group of A37. Kae1 likely plays a direct catalytic role in this reaction, but requires other protein(s) of the complex to fulfill this activity. This Pyrococcus furiosus (strain ATCC 43587 / DSM 3638 / JCM 8422 / Vc1) protein is tRNA N6-adenosine threonylcarbamoyltransferase.